The primary structure comprises 214 residues: Ceramide-1-phosphate transfer protein (214 aa).

Residues Asp-56, Lys-60, Arg-106, Arg-110, and His-150 each coordinate an N-acylsphingoid base 1-phosphate.

It belongs to the GLTP family. In terms of tissue distribution, ubiquitous. Detected in heart, brain, placenta, lung, liver, skeletal muscle, kidney, pancreas, spleen, thymus, prostate, testis, ovary, small intestine, colon and peripheral blood leukocytes.

The protein resides in the cytoplasm. It localises to the cytosol. The protein localises to the golgi apparatus. Its subcellular location is the trans-Golgi network membrane. It is found in the cell membrane. The protein resides in the endosome membrane. It localises to the nucleus outer membrane. The enzyme catalyses N-(hexadecanoyl)-sphing-4-enine-1-phosphate(in) = N-(hexadecanoyl)-sphing-4-enine-1-phosphate(out). It catalyses the reaction N-(9Z-octadecenoyl)-sphing-4-enine-1-phosphate(in) = N-(9Z-octadecenoyl)-sphing-4-enine-1-phosphate(out). Its function is as follows. Mediates the intracellular transfer of ceramide-1-phosphate (C1P) between organelle membranes and the cell membrane. Required for normal structure of the Golgi stacks. Can bind phosphoceramides with a variety of aliphatic chains, but has a preference for lipids with saturated C16:0 or monounsaturated C18:1 aliphatic chains, and is inefficient with phosphoceramides containing lignoceryl (C24:0). Plays a role in the regulation of the cellular levels of ceramide-1-phosphate, and thereby contributes to the regulation of phospholipase PLA2G4A activity and the release of arachidonic acid. Has no activity with galactosylceramide, lactosylceramide, sphingomyelin, phosphatidylcholine, phosphatidic acid and ceramide. C1P transfer is stimulated by phosphatidylserine in C1P source vesicles. Regulates autophagy, inflammasome mediated IL1B and IL18 processing, and pyroptosis, but not apoptosis. This Homo sapiens (Human) protein is Ceramide-1-phosphate transfer protein.